The chain runs to 123 residues: UPF0102 protein SPO0400 (123 aa).

This sequence belongs to the UPF0102 family.

This is UPF0102 protein SPO0400 from Ruegeria pomeroyi (strain ATCC 700808 / DSM 15171 / DSS-3) (Silicibacter pomeroyi).